We begin with the raw amino-acid sequence, 443 residues long: Tol-Pal system protein TolB (443 aa).

The signal sequence occupies residues 1 to 33 (MKIGIINTKIRTVFSAFACMIAASLVCTMPARA).

The protein belongs to the TolB family. As to quaternary structure, the Tol-Pal system is composed of five core proteins: the inner membrane proteins TolA, TolQ and TolR, the periplasmic protein TolB and the outer membrane protein Pal. They form a network linking the inner and outer membranes and the peptidoglycan layer.

It is found in the periplasm. Its function is as follows. Part of the Tol-Pal system, which plays a role in outer membrane invagination during cell division and is important for maintaining outer membrane integrity. In Brucella abortus (strain S19), this protein is Tol-Pal system protein TolB.